A 518-amino-acid chain; its full sequence is MAETSLLEAGASAASTAAALENLQVEASCSVCLEYLKEPVIIECGHNFCKACITRWWEDLERDFPCPVCRKTSRYRSLRPNRQLGSMVEIAKQLQAVKRKIRDESLCPQHHEALSLFCYEDQEAVCLICAISHTHRAHTVVPLDDATQEYKEKLQKCLEPLEQKLQEITRCKSSEEKKPGELKRLVESRRQQILREFEELHRRLDEEQQVLLSRLEEEEQDILQRLRENAAHLGDKRRDLAHLAAEVEGKCLQSGFEMLKDVKSTLEKNIPRKFGGSLSRICPRDHKALLGLVKEINRCEKVKTMEVTSVSIELEKNFSNFPRQYFALRKILKQLIADVTLDPETAHPNLVLSEDRKSVKFVETRLRDLPDTPRRFTFYPCVLATEGFTSGRHYWEVEVGDKTHWAVGVCRDSVSRKGELTPLPETGYWRVRLWNGDKYAATTTPFTPLHIKVKPKRVGIFLDYEAGTLSFYNVTDRSHIYTFTDTFTEKLWPLFYPGIRAGRKNAAPLTIRPPTDWE.

The segment at 29–70 (CSVCLEYLKEPVIIECGHNFCKACITRWWEDLERDFPCPVCR) adopts an RING-type zinc-finger fold. A B box-type zinc finger spans residues 102 to 143 (RDESLCPQHHEALSLFCYEDQEAVCLICAISHTHRAHTVVPL). 4 residues coordinate Zn(2+): Cys-107, His-110, Cys-129, and His-135. The stretch at 181–250 (ELKRLVESRR…AHLAAEVEGK (70 aa)) forms a coiled coil. 2 interaction with CDKN1A regions span residues 268 to 337 (KNIP…QLIA) and 389 to 518 (TSGR…TDWE). The B30.2/SPRY domain occupies 319-514 (SNFPRQYFAL…NAAPLTIRPP (196 aa)).

This sequence belongs to the TRIM/RBCC family. In terms of assembly, interacts with MOAP1. Interacts with CDKN1A. Post-translationally, autoubiquitinated.

Its subcellular location is the cytoplasm. It localises to the cytosol. The protein resides in the mitochondrion. The protein localises to the nucleus. The catalysed reaction is S-ubiquitinyl-[E2 ubiquitin-conjugating enzyme]-L-cysteine + [acceptor protein]-L-lysine = [E2 ubiquitin-conjugating enzyme]-L-cysteine + N(6)-ubiquitinyl-[acceptor protein]-L-lysine.. It participates in protein modification; protein ubiquitination. Functionally, E3 ubiquitin-protein ligase. May facilitate apoptosis by inhibiting APC/C-Cdh1-mediated poly-ubiquitination and subsequent proteasome-mediated degradation of the pro-apoptotic protein MOAP1. Regulates the G1/S transition of the cell cycle and DNA damage-induced G2 arrest by stabilizing CDKN1A/p21. Positively regulates CDKN1A/p21 stability by competing with DTL for CDKN1A/p21 binding, therefore disrupting DCX(DTL) E3 ubiquitin ligase complex-mediated CDKN1A/p21 ubiquitination and degradation. The protein is E3 ubiquitin-protein ligase TRIM39 (TRIM39) of Pan troglodytes (Chimpanzee).